Consider the following 164-residue polypeptide: ATP synthase subunit b (164 aa).

Residues 6-26 (GELIGNFILITGSFILLLVLI) form a helical membrane-spanning segment.

The protein belongs to the ATPase B chain family. F-type ATPases have 2 components, F(1) - the catalytic core - and F(0) - the membrane proton channel. F(1) has five subunits: alpha(3), beta(3), gamma(1), delta(1), epsilon(1). F(0) has three main subunits: a(1), b(2) and c(10-14). The alpha and beta chains form an alternating ring which encloses part of the gamma chain. F(1) is attached to F(0) by a central stalk formed by the gamma and epsilon chains, while a peripheral stalk is formed by the delta and b chains.

Its subcellular location is the cell membrane. Functionally, f(1)F(0) ATP synthase produces ATP from ADP in the presence of a proton or sodium gradient. F-type ATPases consist of two structural domains, F(1) containing the extramembraneous catalytic core and F(0) containing the membrane proton channel, linked together by a central stalk and a peripheral stalk. During catalysis, ATP synthesis in the catalytic domain of F(1) is coupled via a rotary mechanism of the central stalk subunits to proton translocation. Its function is as follows. Component of the F(0) channel, it forms part of the peripheral stalk, linking F(1) to F(0). In Streptococcus pneumoniae serotype 2 (strain D39 / NCTC 7466), this protein is ATP synthase subunit b.